Reading from the N-terminus, the 273-residue chain is 4-hydroxy-tetrahydrodipicolinate reductase (273 aa).

An NAD(+)-binding site is contributed by Gly-12–Met-17. Position 39 (Arg-39) interacts with NADP(+). NAD(+)-binding positions include Gly-102 to Thr-104 and Ala-126 to Phe-129. The active-site Proton donor/acceptor is the His-159. (S)-2,3,4,5-tetrahydrodipicolinate is bound at residue His-160. Catalysis depends on Lys-163, which acts as the Proton donor. (S)-2,3,4,5-tetrahydrodipicolinate is bound at residue Gly-169–Thr-170.

This sequence belongs to the DapB family. Homotetramer.

It is found in the cytoplasm. It carries out the reaction (S)-2,3,4,5-tetrahydrodipicolinate + NAD(+) + H2O = (2S,4S)-4-hydroxy-2,3,4,5-tetrahydrodipicolinate + NADH + H(+). It catalyses the reaction (S)-2,3,4,5-tetrahydrodipicolinate + NADP(+) + H2O = (2S,4S)-4-hydroxy-2,3,4,5-tetrahydrodipicolinate + NADPH + H(+). It participates in amino-acid biosynthesis; L-lysine biosynthesis via DAP pathway; (S)-tetrahydrodipicolinate from L-aspartate: step 4/4. In terms of biological role, catalyzes the conversion of 4-hydroxy-tetrahydrodipicolinate (HTPA) to tetrahydrodipicolinate. The sequence is that of 4-hydroxy-tetrahydrodipicolinate reductase from Serratia proteamaculans (strain 568).